The primary structure comprises 1095 residues: Collagen, type I, alpha 1a (1095 aa).

Over residues 1–21 (SPAMPVPGPMGPMGPRGPPGS) the composition is skewed to pro residues. Positions 1-1011 (SPAMPVPGPM…QPQEKAPDPY (1011 aa)) are disordered. Over residues 22 to 49 (PGASGPQGFTGPPGEPGEAGSAGAMGPR) the composition is skewed to low complexity. A compositionally biased stretch (basic and acidic residues) spans 58 to 72 (NGEDGESGKPGRGGE). Positions 127–145 (TGAAGAAGARGNDGAAGAA) are enriched in low complexity. Over residues 147-160 (PPGPTGPAGPPGFP) the composition is skewed to pro residues. The span at 161–179 (GGPGAKGDAGAQGGRGPEG) shows a compositional bias: gly residues. Low complexity-rich tracts occupy residues 180-223 (PAGA…AGAP), 232-270 (SGPQ…APGV), and 288-297 (EPGAAGARGA). A compositionally biased stretch (gly residues) spans 299 to 311 (GERGGPGGRGFPG). Low complexity-rich tracts occupy residues 385 to 400 (VGAR…PGPK), 477 to 489 (LPGE…PAGA), 498 to 544 (ERGA…QGMP), and 577 to 592 (RGLT…AGAT). The span at 602 to 611 (GPVGPGGARG) shows a compositional bias: gly residues. Composition is skewed to low complexity over residues 625 to 661 (AGFA…AGPT) and 675 to 697 (PKGA…AGRV). Pro residues predominate over residues 699 to 712 (PPGPSGNPGPPGPA). The span at 804-822 (PGLAGAPGEPGREGSPGNE) shows a compositional bias: low complexity. The span at 848–858 (APGPPGAPGPV) shows a compositional bias: pro residues. The span at 872-893 (PAGPAGSAGPAGPRGPAGALGL) shows a compositional bias: low complexity. Positions 894 to 908 (RGDKGESGEAGERGM) are enriched in basic and acidic residues. The segment covering 924–960 (AGSSGEQGPAGAAGPAGPRGPAGSAGSPGKDGMSGLP) has biased composition (low complexity). The segment covering 976 to 988 (AGPPGPPGPPGAP) has biased composition (pro residues). The Fibrillar collagen NC1 domain maps to 1062 to 1095 (TGTWGKLPLLDLAPMDVGAPDQEFGLEVGPVCFL).

This sequence belongs to the fibrillar collagen family.

The protein resides in the secreted. Its subcellular location is the extracellular space. It is found in the extracellular matrix. The chain is Collagen, type I, alpha 1a from Epinephelus caninus (Dogtooth grouper).